The primary structure comprises 445 residues: Trigger factor (445 aa).

One can recognise a PPIase FKBP-type domain in the interval 168–253 (GDAVIVDFVG…IHEVRAPQTP (86 aa)).

It belongs to the FKBP-type PPIase family. Tig subfamily.

The protein resides in the cytoplasm. The enzyme catalyses [protein]-peptidylproline (omega=180) = [protein]-peptidylproline (omega=0). Involved in protein export. Acts as a chaperone by maintaining the newly synthesized protein in an open conformation. Functions as a peptidyl-prolyl cis-trans isomerase. This Hyphomonas neptunium (strain ATCC 15444) protein is Trigger factor.